The chain runs to 153 residues: Catabolic 3-dehydroquinase (153 aa).

Y24 acts as the Proton acceptor in catalysis. Substrate-binding residues include N75, H81, and D88. H101 (proton donor) is an active-site residue. Substrate is bound by residues 102–103 and R112; that span reads VS.

The protein belongs to the type-II 3-dehydroquinase family. Homododecamer. Adopts a ring-like structure, composed of an arrangement of two hexameric rings stacked on top of one another.

It catalyses the reaction 3-dehydroquinate = 3-dehydroshikimate + H2O. It functions in the pathway aromatic compound metabolism; 3,4-dihydroxybenzoate biosynthesis; 3,4-dihydroxybenzoate from 3-dehydroquinate: step 1/2. Functionally, is involved in the catabolism of quinate. Allows the utilization of quinate as carbon source via the beta-ketoadipate pathway. The sequence is that of Catabolic 3-dehydroquinase from Aspergillus oryzae (strain ATCC 42149 / RIB 40) (Yellow koji mold).